A 341-amino-acid chain; its full sequence is Holliday junction branch migration complex subunit RuvB (341 aa).

Positions 1–180 are large ATPase domain (RuvB-L); that stretch reads MAKSHTLNPE…FGIQLRLDYY (180 aa). ATP-binding residues include L19, R20, G61, K64, T65, T66, R170, Y180, and R217. Position 65 (T65) interacts with Mg(2+). The interval 181 to 251 is small ATPAse domain (RuvB-S); the sequence is NDEEMKQIVL…LCLKAFEKMG (71 aa). A head domain (RuvB-H) region spans residues 254-341; that stretch reads DLGLDGMDRQ…VHHGQDPTLF (88 aa). Positions 309 and 314 each coordinate DNA.

Belongs to the RuvB family. As to quaternary structure, homohexamer. Forms an RuvA(8)-RuvB(12)-Holliday junction (HJ) complex. HJ DNA is sandwiched between 2 RuvA tetramers; dsDNA enters through RuvA and exits via RuvB. An RuvB hexamer assembles on each DNA strand where it exits the tetramer. Each RuvB hexamer is contacted by two RuvA subunits (via domain III) on 2 adjacent RuvB subunits; this complex drives branch migration. In the full resolvosome a probable DNA-RuvA(4)-RuvB(12)-RuvC(2) complex forms which resolves the HJ.

It localises to the cytoplasm. It catalyses the reaction ATP + H2O = ADP + phosphate + H(+). Its function is as follows. The RuvA-RuvB-RuvC complex processes Holliday junction (HJ) DNA during genetic recombination and DNA repair, while the RuvA-RuvB complex plays an important role in the rescue of blocked DNA replication forks via replication fork reversal (RFR). RuvA specifically binds to HJ cruciform DNA, conferring on it an open structure. The RuvB hexamer acts as an ATP-dependent pump, pulling dsDNA into and through the RuvAB complex. RuvB forms 2 homohexamers on either side of HJ DNA bound by 1 or 2 RuvA tetramers; 4 subunits per hexamer contact DNA at a time. Coordinated motions by a converter formed by DNA-disengaged RuvB subunits stimulates ATP hydrolysis and nucleotide exchange. Immobilization of the converter enables RuvB to convert the ATP-contained energy into a lever motion, pulling 2 nucleotides of DNA out of the RuvA tetramer per ATP hydrolyzed, thus driving DNA branch migration. The RuvB motors rotate together with the DNA substrate, which together with the progressing nucleotide cycle form the mechanistic basis for DNA recombination by continuous HJ branch migration. Branch migration allows RuvC to scan DNA until it finds its consensus sequence, where it cleaves and resolves cruciform DNA. In Leptospira interrogans serogroup Icterohaemorrhagiae serovar copenhageni (strain Fiocruz L1-130), this protein is Holliday junction branch migration complex subunit RuvB.